The sequence spans 484 residues: MQEGKNIWSLILAAIRKELSEEEFYIWFENLYFIDATDENIKISAPNSFHKNQVEKRFAKRIKEILIEKGHNTINVEFINSPNDSKTHNMESKNISLKDISTQQDSPEKRTTFKIHTKNIIESTKQYTTKEEIHTKYRNPFLKKKYTFENFITGPNNKLAYNASLSIAKNPGKKYNPCLIYGGVGLGKTHLLQSIGNKTEELHKEFKILYVTAENFLNEFVESIKTNETKRFKKKYRYLDMLLLDDIHDLQKKEGIQEELFHTFNALYEDNKQMVFTCDRQPSELINFTDRLKSRFTRGLNVDISKPNFELRVAIIEKKAEEDGIKVPKSILNLVAKKVTTNIRDLEAAVTKLKAHIDLEDIEIDTSTVDKIIKEIIVYENDNTNTHNKINIESIKKVILRELKLTNKDIEGNSKKPEITKARHIYAYLLRNFTELSTIEIGKIIGGKTHSTVLYSINKIDKERNNDLEINNLIIELMNKINKK.

Residues 1–73 form a domain I, interacts with DnaA modulators region; it reads MQEGKNIWSL…EILIEKGHNT (73 aa). Residues 73–140 form a domain II region; it reads TINVEFINSP…EEIHTKYRNP (68 aa). The domain III, AAA+ region stretch occupies residues 141–357; that stretch reads FLKKKYTFEN…AAVTKLKAHI (217 aa). ATP contacts are provided by Gly-185, Gly-187, Lys-188, and Thr-189. The domain IV, binds dsDNA stretch occupies residues 358 to 484; sequence DLEDIEIDTS…IELMNKINKK (127 aa).

This sequence belongs to the DnaA family. Oligomerizes as a right-handed, spiral filament on DNA at oriC.

The protein resides in the cytoplasm. Its function is as follows. Plays an essential role in the initiation and regulation of chromosomal replication. ATP-DnaA binds to the origin of replication (oriC) to initiate formation of the DNA replication initiation complex once per cell cycle. Binds the DnaA box (a 9 base pair repeat at the origin) and separates the double-stranded (ds)DNA. Forms a right-handed helical filament on oriC DNA; dsDNA binds to the exterior of the filament while single-stranded (ss)DNA is stabiized in the filament's interior. The ATP-DnaA-oriC complex binds and stabilizes one strand of the AT-rich DNA unwinding element (DUE), permitting loading of DNA polymerase. After initiation quickly degrades to an ADP-DnaA complex that is not apt for DNA replication. Binds acidic phospholipids. The polypeptide is Chromosomal replication initiator protein DnaA (Borrelia hermsii (strain HS1 / DAH)).